Consider the following 184-residue polypeptide: MEFAFYICGLIAILATLRVITHTNPVHALLYLIISLLAISGVFFSLGAYFAGALEIIVYAGAIMVLFVFVVMMLNLGGSEIEQERQWLKPQVWIGPAILSAIMLVVIVYAILGVNDQGIDGTPISAKAVGITLFGPYVLAVELASMLLLAGLVVAFHVGREERAGEVLSNRKDDSAKRKTEEHA.

The chain crosses the membrane as a helical span at residues 1-21; it reads MEFAFYICGLIAILATLRVIT. The Cytoplasmic segment spans residues 22 to 27; sequence HTNPVH. A helical membrane pass occupies residues 28 to 48; the sequence is ALLYLIISLLAISGVFFSLGA. The Periplasmic portion of the chain corresponds to 49 to 53; it reads YFAGA. Residues 54–74 traverse the membrane as a helical segment; that stretch reads LEIIVYAGAIMVLFVFVVMML. Residues 75 to 91 are Cytoplasmic-facing; it reads NLGGSEIEQERQWLKPQ. Residues 92 to 112 form a helical membrane-spanning segment; sequence VWIGPAILSAIMLVVIVYAIL. At 113 to 137 the chain is on the periplasmic side; sequence GVNDQGIDGTPISAKAVGITLFGPY. Residues 138–158 traverse the membrane as a helical segment; sequence VLAVELASMLLLAGLVVAFHV. The Cytoplasmic segment spans residues 159–184; the sequence is GREERAGEVLSNRKDDSAKRKTEEHA.

This sequence belongs to the complex I subunit 6 family. Composed of 13 different subunits. Subunits NuoA, H, J, K, L, M, N constitute the membrane sector of the complex.

Its subcellular location is the cell inner membrane. It catalyses the reaction a quinone + NADH + 5 H(+)(in) = a quinol + NAD(+) + 4 H(+)(out). Its function is as follows. NDH-1 shuttles electrons from NADH, via FMN and iron-sulfur (Fe-S) centers, to quinones in the respiratory chain. The immediate electron acceptor for the enzyme in this species is believed to be ubiquinone. Couples the redox reaction to proton translocation (for every two electrons transferred, four hydrogen ions are translocated across the cytoplasmic membrane), and thus conserves the redox energy in a proton gradient. This chain is NADH-quinone oxidoreductase subunit J (nuoJ), found in Escherichia coli O157:H7.